The primary structure comprises 362 residues: Cell death regulator Aven (362 aa).

Disordered stretches follow at residues 1-111 (MQAE…NYSK), 214-237 (VKPK…GPGG), and 253-362 (VLLG…SMIS). Residues 8 to 17 (RGGRGRRPGR) are compositionally biased toward basic residues. Residues 37-47 (RGGGGGGGGDG) are compositionally biased toward gly residues. Residues 50–60 (RRGRGRGRGFR) are compositionally biased toward basic residues. Positions 61–72 (GARGGRGGGGAP) are enriched in gly residues. Over residues 90–105 (VEDDSDAETYGEENDE) the composition is skewed to acidic residues. Ser94 bears the Phosphoserine mark. Lys230 carries the post-translational modification N6-methyllysine. Positions 350-362 (EEELEDWLDSMIS) are enriched in acidic residues.

Binds Apaf-1, BCL-2 and BAD (Bcl-xl). In terms of tissue distribution, highly expressed in testis, ovary, thymus, prostate, spleen, small intestine, colon, heart, skeletal muscle, liver, kidney and pancreas.

It localises to the endomembrane system. Its function is as follows. Protects against apoptosis mediated by Apaf-1. The chain is Cell death regulator Aven (AVEN) from Homo sapiens (Human).